Consider the following 171-residue polypeptide: Inosine/xanthosine triphosphatase (171 aa).

Substrate is bound at residue threonine 8 to lysine 13. Positions 38 and 68 each coordinate Mg(2+).

It belongs to the YjjX NTPase family. Homodimer. The cofactor is Mg(2+). It depends on Mn(2+) as a cofactor.

It catalyses the reaction XTP + H2O = XDP + phosphate + H(+). The catalysed reaction is ITP + H2O = IDP + phosphate + H(+). Functionally, phosphatase that hydrolyzes non-canonical purine nucleotides such as XTP and ITP to their respective diphosphate derivatives. Probably excludes non-canonical purines from DNA/RNA precursor pool, thus preventing their incorporation into DNA/RNA and avoiding chromosomal lesions. This chain is Inosine/xanthosine triphosphatase, found in Citrobacter koseri (strain ATCC BAA-895 / CDC 4225-83 / SGSC4696).